Reading from the N-terminus, the 203-residue chain is Lectin (203 aa).

The N-terminal stretch at 1–20 (MINILHVIAGLALASVGVDA) is a signal peptide. Residues 21–53 (RQVGVGADVLHAVENTIDSITGVEASHSALEVG) constitute a propeptide that is removed on maturation.

As to quaternary structure, monomer.

Its function is as follows. N-acetyl-D-glucosamine-specific lectin. Specifically agglutinates rabbit erythrocytes. The protein is Lectin (UPL1) of Ulva pertusa (Sea lettuce).